The primary structure comprises 317 residues: Melanocyte-stimulating hormone receptor (317 aa).

The Extracellular portion of the chain corresponds to 1-37 (MPVQGSQRRLLGSLNSTPTATPHLGLAANQTGARCLE). Asn-29 carries N-linked (GlcNAc...) asparagine glycosylation. Residues 38–63 (VSIPDGLFLSLGLVSLVENVLVVTAI) form a helical membrane-spanning segment. At 64-72 (AKNRNLHSP) the chain is on the cytoplasmic side. A helical membrane pass occupies residues 73-93 (MYCFICCLALSDLLVSGSNML). The Extracellular segment spans residues 94–118 (ETAVILLLEAGALAARAAVVQQLDN). Residues 119 to 140 (VIDVITCSSMLSSLCFLGAIAV) traverse the membrane as a helical segment. Over 141–163 (DRYISIFYALRYHSIVTLPRARR) the chain is Cytoplasmic. Residues 164–183 (AVAAIWVASVLFSMLFIAYY) form a helical membrane-spanning segment. Residues 184-191 (DHAAVLLC) are Extracellular-facing. Residues 192–211 (LVVFFLAMLVLMAVLYVHML) form a helical membrane-spanning segment. Residues 212–240 (ARACQHAQGIARLHKRQCPAHQGFGLKGA) are Cytoplasmic-facing. Residues 241 to 266 (ATLTILLGIFFLCWGPFFLHLTLIVL) form a helical membrane-spanning segment. Over 267–279 (CPQHPTCSCIFKN) the chain is Extracellular. The chain crosses the membrane as a helical span at residues 280 to 300 (FNLFLALIICNAIIDPLIYAF). At 301 to 317 (RSQELRRTLKEVLLCSW) the chain is on the cytoplasmic side. Cys-315 is lipidated: S-palmitoyl cysteine.

The protein belongs to the G-protein coupled receptor 1 family. As to quaternary structure, interacts with MGRN1, but does not undergo MGRN1-mediated ubiquitination; this interaction competes with GNAS-binding and thus inhibits agonist-induced cAMP production. Interacts with OPN3; the interaction results in a decrease in MC1R-mediated cAMP signaling and ultimately a decrease in melanin production in melanocytes.

It is found in the cell membrane. Functionally, receptor for MSH (alpha, beta and gamma) and ACTH. The activity of this receptor is mediated by G proteins which activate adenylate cyclase. Mediates melanogenesis, the production of eumelanin (black/brown) and phaeomelanin (red/yellow), via regulation of cAMP signaling in melanocytes. In Chlorocebus aethiops (Green monkey), this protein is Melanocyte-stimulating hormone receptor (MC1R).